The sequence spans 121 residues: Large ribosomal subunit protein uL18 (121 aa).

The protein belongs to the universal ribosomal protein uL18 family. As to quaternary structure, part of the 50S ribosomal subunit; part of the 5S rRNA/L5/L18/L25 subcomplex. Contacts the 5S and 23S rRNAs.

In terms of biological role, this is one of the proteins that bind and probably mediate the attachment of the 5S RNA into the large ribosomal subunit, where it forms part of the central protuberance. In Roseiflexus castenholzii (strain DSM 13941 / HLO8), this protein is Large ribosomal subunit protein uL18.